Reading from the N-terminus, the 183-residue chain is Hypoxanthine/guanine phosphoribosyltransferase (183 aa).

This sequence belongs to the purine/pyrimidine phosphoribosyltransferase family. Archaeal HPRT subfamily. In terms of assembly, homodimer.

The protein resides in the cytoplasm. The catalysed reaction is IMP + diphosphate = hypoxanthine + 5-phospho-alpha-D-ribose 1-diphosphate. It carries out the reaction GMP + diphosphate = guanine + 5-phospho-alpha-D-ribose 1-diphosphate. Its pathway is purine metabolism; IMP biosynthesis via salvage pathway; IMP from hypoxanthine: step 1/1. Its function is as follows. Catalyzes a salvage reaction resulting in the formation of IMP that is energically less costly than de novo synthesis. The sequence is that of Hypoxanthine/guanine phosphoribosyltransferase from Methanothermococcus okinawensis (strain DSM 14208 / JCM 11175 / IH1).